The sequence spans 773 residues: Serine/threonine-protein kinase CBK1 (773 aa).

Composition is skewed to polar residues over residues 50–59 (LHDQYSSHME) and 178–217 (GNYN…SPQR). Disordered stretches follow at residues 50–111 (LHDQ…GGNI) and 177–275 (NGNY…QQQQ). Composition is skewed to low complexity over residues 218–256 (QPAQ…QQQP) and 265–275 (QQTQLQQQQQQ). The region spanning 370–686 (FHTVQVIGKG…ADEIKSHPFF (317 aa)) is the Protein kinase domain. ATP contacts are provided by residues 376 to 384 (IGKGAFGEV) and K399. Residue D493 is the Proton acceptor of the active site. The 85-residue stretch at 687-771 (RGVDWNTIRQ…SRFDYLTRKN (85 aa)) folds into the AGC-kinase C-terminal domain.

This sequence belongs to the protein kinase superfamily. STE Ser/Thr protein kinase family. COT1 subfamily.

It catalyses the reaction L-seryl-[protein] + ATP = O-phospho-L-seryl-[protein] + ADP + H(+). The catalysed reaction is L-threonyl-[protein] + ATP = O-phospho-L-threonyl-[protein] + ADP + H(+). Functionally, protein kinase that seems to play a role in the regulation of cell morphogenesis and proliferation. This Candida glabrata (strain ATCC 2001 / BCRC 20586 / JCM 3761 / NBRC 0622 / NRRL Y-65 / CBS 138) (Yeast) protein is Serine/threonine-protein kinase CBK1 (CBK1).